An 83-amino-acid chain; its full sequence is Small ribosomal subunit protein uS17 (83 aa).

Belongs to the universal ribosomal protein uS17 family. Part of the 30S ribosomal subunit.

Its function is as follows. One of the primary rRNA binding proteins, it binds specifically to the 5'-end of 16S ribosomal RNA. This Francisella tularensis subsp. tularensis (strain FSC 198) protein is Small ribosomal subunit protein uS17.